A 199-amino-acid chain; its full sequence is Recombination protein RecR (199 aa).

A C4-type zinc finger spans residues 57–72 (CERCNNLSEAPLCAVC). The 95-residue stretch at 80–174 (SILCVVESPA…TISRIARGVP (95 aa)) folds into the Toprim domain.

It belongs to the RecR family.

Its function is as follows. May play a role in DNA repair. It seems to be involved in an RecBC-independent recombinational process of DNA repair. It may act with RecF and RecO. The polypeptide is Recombination protein RecR (Acidithiobacillus ferrooxidans (strain ATCC 23270 / DSM 14882 / CIP 104768 / NCIMB 8455) (Ferrobacillus ferrooxidans (strain ATCC 23270))).